The sequence spans 343 residues: Palmitoyltransferase ZDHHC4 (343 aa).

The Lumenal portion of the chain corresponds to Met1–Asp2. A helical membrane pass occupies residues Phe3–Ile23. At Phe24–Thr67 the chain is on the cytoplasmic side. A helical transmembrane segment spans residues Phe68–Phe88. At Gly89–Tyr100 the chain is on the lumenal side. Residues Leu101–Ala121 traverse the membrane as a helical segment. The Cytoplasmic portion of the chain corresponds to Asn122 to Tyr193. A DHHC domain is found at Ser149–Leu199. Cys179 acts as the S-palmitoyl cysteine intermediate in catalysis. Residues Phe194–Ala214 form a helical membrane-spanning segment. Residues Phe215–Arg255 are Lumenal-facing. Residues Ile256–Phe276 form a helical membrane-spanning segment. At Ala277 to Lys343 the chain is on the cytoplasmic side. Positions Lys340–Lys343 match the Di-lysine motif motif.

This sequence belongs to the DHHC palmitoyltransferase family. Interacts with CPT1A.

It localises to the endoplasmic reticulum membrane. It is found in the golgi apparatus membrane. The protein localises to the cell membrane. It catalyses the reaction L-cysteinyl-[protein] + hexadecanoyl-CoA = S-hexadecanoyl-L-cysteinyl-[protein] + CoA. Functionally, palmitoyltransferase that could catalyze the addition of palmitate onto protein substrates including the D(2) dopamine receptor DRD2, GSK3B or MAVS. Mediates GSK3B palmitoylation to prevent its AKT1-mediated phosphorylation leading to activation of the STAT3 signaling pathway. Also catalyzes MAVS palmitoylation which promotes its stabilization and activation by inhibiting 'Lys-48'- but facilitating 'Lys-63'-linked ubiquitination. The protein is Palmitoyltransferase ZDHHC4 of Mus musculus (Mouse).